The chain runs to 25 residues: Caerin-1.10 (25 aa).

Leucine 25 carries the post-translational modification Leucine amide.

It belongs to the frog skin active peptide (FSAP) family. Caerin subfamily. As to expression, expressed by the skin dorsal glands.

Its subcellular location is the secreted. Its function is as follows. Antibacterial peptide with wide spectrum of activity. This is Caerin-1.10 from Litoria rothii (Roth's tree frog).